The primary structure comprises 466 residues: Chromosomal replication initiator protein DnaA (466 aa).

Residues 1-86 are domain I, interacts with DnaA modulators; sequence MSLSLWQQCL…EVGTKPVTQT (86 aa). The tract at residues 86-129 is domain II; it reads TLKTPVHNVVAPTQTTTAQPQRVAPAARSGWDNVPAPAEPTYRS. Residues 130–346 are domain III, AAA+ region; it reads NVNVKHTFDN…GALNRVIANA (217 aa). 4 residues coordinate ATP: G174, G176, K177, and T178. Residues 347 to 466 are domain IV, binds dsDNA; it reads NFTGRAITID…FSNLIRTLSS (120 aa).

It belongs to the DnaA family. Oligomerizes as a right-handed, spiral filament on DNA at oriC.

The protein resides in the cytoplasm. Plays an essential role in the initiation and regulation of chromosomal replication. ATP-DnaA binds to the origin of replication (oriC) to initiate formation of the DNA replication initiation complex once per cell cycle. Binds the DnaA box (a 9 base pair repeat at the origin) and separates the double-stranded (ds)DNA. Forms a right-handed helical filament on oriC DNA; dsDNA binds to the exterior of the filament while single-stranded (ss)DNA is stabiized in the filament's interior. The ATP-DnaA-oriC complex binds and stabilizes one strand of the AT-rich DNA unwinding element (DUE), permitting loading of DNA polymerase. After initiation quickly degrades to an ADP-DnaA complex that is not apt for DNA replication. Binds acidic phospholipids. The sequence is that of Chromosomal replication initiator protein DnaA from Salmonella dublin (strain CT_02021853).